The primary structure comprises 365 residues: tRNA/tmRNA (uracil-C(5))-methyltransferase (365 aa).

S-adenosyl-L-methionine is bound by residues Q196, Y224, N229, E245, and D298. C323 acts as the Nucleophile in catalysis. E357 acts as the Proton acceptor in catalysis.

It belongs to the class I-like SAM-binding methyltransferase superfamily. RNA M5U methyltransferase family. TrmA subfamily.

The enzyme catalyses uridine(54) in tRNA + S-adenosyl-L-methionine = 5-methyluridine(54) in tRNA + S-adenosyl-L-homocysteine + H(+). It catalyses the reaction uridine(341) in tmRNA + S-adenosyl-L-methionine = 5-methyluridine(341) in tmRNA + S-adenosyl-L-homocysteine + H(+). In terms of biological role, dual-specificity methyltransferase that catalyzes the formation of 5-methyluridine at position 54 (m5U54) in all tRNAs, and that of position 341 (m5U341) in tmRNA (transfer-mRNA). This is tRNA/tmRNA (uracil-C(5))-methyltransferase from Nautilia profundicola (strain ATCC BAA-1463 / DSM 18972 / AmH).